A 222-amino-acid polypeptide reads, in one-letter code: Glutathione-specific gamma-glutamylcyclotransferase 1 (222 aa).

Residues 1-22 (MKQESAAPNTPPTSQSPTPSAQ) are compositionally biased toward low complexity. A disordered region spans residues 1 to 24 (MKQESAAPNTPPTSQSPTPSAQFP). 35-40 (IFGYGS) is a substrate binding site. Glutamate 115 functions as the Proton acceptor in the catalytic mechanism.

Belongs to the gamma-glutamylcyclotransferase family. ChaC subfamily. As to quaternary structure, interacts with NOTCH1 (via extracellular region).

Its subcellular location is the cytoplasm. It is found in the cytosol. The protein localises to the golgi apparatus. It localises to the trans-Golgi network. It carries out the reaction glutathione = L-cysteinylglycine + 5-oxo-L-proline. In terms of biological role, catalyzes the cleavage of glutathione into 5-oxo-L-proline and a Cys-Gly dipeptide. Acts specifically on glutathione, but not on other gamma-glutamyl peptides. Glutathione depletion is an important factor for apoptosis initiation and execution. Acts as a pro-apoptotic component of the unfolded protein response pathway by mediating the pro-apoptotic effects of the ATF4-ATF3-DDIT3/CHOP cascade. Negative regulator of Notch signaling pathway involved in embryonic neurogenesis: acts by inhibiting Notch cleavage by furin, maintaining Notch in an immature inactive form, thereby promoting neurogenesis in embryos. This Homo sapiens (Human) protein is Glutathione-specific gamma-glutamylcyclotransferase 1.